Here is a 482-residue protein sequence, read N- to C-terminus: Glutamyl-tRNA(Gln) amidotransferase subunit A (482 aa).

Residues Lys75 and Ser150 each act as charge relay system in the active site. Residue Ser174 is the Acyl-ester intermediate of the active site.

This sequence belongs to the amidase family. GatA subfamily. Heterotrimer of A, B and C subunits.

It carries out the reaction L-glutamyl-tRNA(Gln) + L-glutamine + ATP + H2O = L-glutaminyl-tRNA(Gln) + L-glutamate + ADP + phosphate + H(+). Its function is as follows. Allows the formation of correctly charged Gln-tRNA(Gln) through the transamidation of misacylated Glu-tRNA(Gln) in organisms which lack glutaminyl-tRNA synthetase. The reaction takes place in the presence of glutamine and ATP through an activated gamma-phospho-Glu-tRNA(Gln). The chain is Glutamyl-tRNA(Gln) amidotransferase subunit A from Rippkaea orientalis (strain PCC 8801 / RF-1) (Cyanothece sp. (strain PCC 8801)).